A 124-amino-acid chain; its full sequence is Putative membrane protein insertion efficiency factor (124 aa).

Positions 1–24 (MHDPHGHAHTVRPPGRGRNWPGPW) are disordered. A compositionally biased stretch (low complexity) spans 12-24 (RPPGRGRNWPGPW).

It belongs to the UPF0161 family.

It is found in the cell inner membrane. In terms of biological role, could be involved in insertion of integral membrane proteins into the membrane. The protein is Putative membrane protein insertion efficiency factor of Mesorhizobium japonicum (strain LMG 29417 / CECT 9101 / MAFF 303099) (Mesorhizobium loti (strain MAFF 303099)).